The primary structure comprises 253 residues: uncharacterized protein (253 aa).

This sequence belongs to the herpesviridae BTRF1 family.

This is an uncharacterized protein from Saimiriine herpesvirus 2 (strain 11) (SaHV-2).